The chain runs to 94 residues: Large ribosomal subunit protein bL28 (94 aa).

Positions 1–21 are disordered; the sequence is MARRCEVTGRGTVSGNNVSHS. Polar residues predominate over residues 11–20; sequence GTVSGNNVSH.

The protein belongs to the bacterial ribosomal protein bL28 family.

The sequence is that of Large ribosomal subunit protein bL28 from Leptospira interrogans serogroup Icterohaemorrhagiae serovar copenhageni (strain Fiocruz L1-130).